Here is a 122-residue protein sequence, read N- to C-terminus: MIQVQTILNSADNTGAKKLMCIRVLGGSNRRYASLGDIIVCSVKEATPDAVVKKGEVVKAVVVRTKKEVRRPDGTYIKFDENAAVIIKDDKSPRGTRIFGPVARELREKDFMKIISLAPEVL.

It belongs to the universal ribosomal protein uL14 family. As to quaternary structure, part of the 50S ribosomal subunit. Forms a cluster with proteins L3 and L19. In the 70S ribosome, L14 and L19 interact and together make contacts with the 16S rRNA in bridges B5 and B8.

Binds to 23S rRNA. Forms part of two intersubunit bridges in the 70S ribosome. This Carboxydothermus hydrogenoformans (strain ATCC BAA-161 / DSM 6008 / Z-2901) protein is Large ribosomal subunit protein uL14.